We begin with the raw amino-acid sequence, 715 residues long: Fatty acid oxidation complex subunit alpha (715 aa).

The tract at residues 1 to 190 is enoyl-CoA hydratase/isomerase; the sequence is MIYQGKAITV…KVGAVDAVVA (190 aa). Residue Asp-297 coordinates substrate. The tract at residues 312-715 is 3-hydroxyacyl-CoA dehydrogenase; sequence HDAKQAAVLG…MAKNGQRFFN (404 aa). NAD(+) contacts are provided by residues Met-325, Asp-344, 401 to 403, Lys-408, and Ser-430; that span reads VVE. The active-site For 3-hydroxyacyl-CoA dehydrogenase activity is the His-451. An NAD(+)-binding site is contributed by Asn-454. Substrate contacts are provided by Asn-501 and Tyr-660.

This sequence in the N-terminal section; belongs to the enoyl-CoA hydratase/isomerase family. It in the C-terminal section; belongs to the 3-hydroxyacyl-CoA dehydrogenase family. Heterotetramer of two alpha chains (FadB) and two beta chains (FadA).

It catalyses the reaction a (3S)-3-hydroxyacyl-CoA + NAD(+) = a 3-oxoacyl-CoA + NADH + H(+). The enzyme catalyses a (3S)-3-hydroxyacyl-CoA = a (2E)-enoyl-CoA + H2O. The catalysed reaction is a 4-saturated-(3S)-3-hydroxyacyl-CoA = a (3E)-enoyl-CoA + H2O. It carries out the reaction (3S)-3-hydroxybutanoyl-CoA = (3R)-3-hydroxybutanoyl-CoA. It catalyses the reaction a (3Z)-enoyl-CoA = a 4-saturated (2E)-enoyl-CoA. The enzyme catalyses a (3E)-enoyl-CoA = a 4-saturated (2E)-enoyl-CoA. Its pathway is lipid metabolism; fatty acid beta-oxidation. Its function is as follows. Involved in the aerobic and anaerobic degradation of long-chain fatty acids via beta-oxidation cycle. Catalyzes the formation of 3-oxoacyl-CoA from enoyl-CoA via L-3-hydroxyacyl-CoA. It can also use D-3-hydroxyacyl-CoA and cis-3-enoyl-CoA as substrate. This is Fatty acid oxidation complex subunit alpha from Ectopseudomonas oleovorans (Pseudomonas oleovorans).